The sequence spans 647 residues: Golgi-associated RAB2B interactor protein 3 (647 aa).

The segment covering I188–V202 has biased composition (polar residues). Disordered regions lie at residues I188–D220, T267–R296, S361–S384, and R465–S573. Positions I205–K214 are enriched in basic and acidic residues. The segment covering S361 to S378 has biased composition (polar residues). A Phosphoserine modification is found at S378. The segment covering T478–K491 has biased composition (basic and acidic residues). Basic residues predominate over residues G492–R501. The Bipartite nuclear localization signal signature appears at R494–K511. Over residues K528 to T556 the composition is skewed to basic and acidic residues. A phosphoserine mark is found at S634 and S636.

This sequence belongs to the GARIN family. In terms of assembly, interacts (via N-terminus) with RAB2B (in GTP-bound form). Interacts with FRG1.

Its subcellular location is the golgi apparatus. The protein localises to the nucleus. It is found in the cajal body. May be involved in RNA biogenesis. This Rattus norvegicus (Rat) protein is Golgi-associated RAB2B interactor protein 3 (Garin3).